The chain runs to 469 residues: Glutamate--tRNA ligase (469 aa).

A 'HIGH' region motif is present at residues 11-21 (PSPTGFIHLGN). A 'KMSKS' region motif is present at residues 243–247 (KMSKR). K246 is an ATP binding site.

This sequence belongs to the class-I aminoacyl-tRNA synthetase family. Glutamate--tRNA ligase type 1 subfamily. Monomer.

Its subcellular location is the cytoplasm. The catalysed reaction is tRNA(Glu) + L-glutamate + ATP = L-glutamyl-tRNA(Glu) + AMP + diphosphate. In terms of biological role, catalyzes the attachment of glutamate to tRNA(Glu) in a two-step reaction: glutamate is first activated by ATP to form Glu-AMP and then transferred to the acceptor end of tRNA(Glu). In Burkholderia cenocepacia (strain HI2424), this protein is Glutamate--tRNA ligase.